Consider the following 151-residue polypeptide: Small ribosomal subunit protein uS15 (151 aa).

At lysine 27 the chain carries N6-acetyllysine; alternate. Lysine 27 is modified (N6-succinyllysine; alternate). A Glycyl lysine isopeptide (Lys-Gly) (interchain with G-Cter in ubiquitin) cross-link involves residue lysine 27. At serine 30 the chain carries Phosphoserine. Position 34 is an N6-succinyllysine (lysine 34). Tyrosine 38 bears the Phosphotyrosine mark. Residue lysine 43 forms a Glycyl lysine isopeptide (Lys-Gly) (interchain with G-Cter in SUMO2) linkage.

It belongs to the universal ribosomal protein uS15 family. In terms of assembly, component of the small ribosomal subunit. Part of the small subunit (SSU) processome, composed of more than 70 proteins and the RNA chaperone small nucleolar RNA (snoRNA) U3. Post-translationally, ubiquitinated at Lys-27 by RNF14 and RNF25 in response to ribosome collisions (ribosome stalling).

The protein localises to the cytoplasm. Its subcellular location is the nucleus. The protein resides in the nucleolus. Functionally, component of the small ribosomal subunit. The ribosome is a large ribonucleoprotein complex responsible for the synthesis of proteins in the cell. Part of the small subunit (SSU) processome, first precursor of the small eukaryotic ribosomal subunit. During the assembly of the SSU processome in the nucleolus, many ribosome biogenesis factors, an RNA chaperone and ribosomal proteins associate with the nascent pre-rRNA and work in concert to generate RNA folding, modifications, rearrangements and cleavage as well as targeted degradation of pre-ribosomal RNA by the RNA exosome. The protein is Small ribosomal subunit protein uS15 (RPS13) of Cricetulus griseus (Chinese hamster).